We begin with the raw amino-acid sequence, 495 residues long: Keratin, type II cytoskeletal 74 (495 aa).

Residues 1 to 105 (MASCHTAGHR…DPEIQKVRAQ (105 aa)) form a head region. The tract at residues 106–141 (EREQIKALNDKFASFIDKVRFLEQQNQVLQTKWELL) is coil 1A. One can recognise an IF rod domain in the interval 106–419 (EREQIKALND…KLLEGEENRM (314 aa)). The segment at 142 to 160 (QQLDLSNCRRNLEPVYEAH) is linker 1. The interval 161 to 252 (ISNLRKQLEM…CLYDEEISQL (92 aa)) is coil 1B. Residues 253–276 (QTHASETSVILSMDNNRDLDLAGI) form a linker 12 region. The tract at residues 277–415 (IAEVRAHYED…ATYRKLLEGE (139 aa)) is coil 2. The tract at residues 416–495 (ENRMSGENPS…AAGTLARKTT (80 aa)) is tail. The interval 449-495 (DSEAGNAVGSPSTPRNSQSKTRGSSVDPRDAQDESAAAAGTLARKTT) is disordered. Positions 457–472 (GSPSTPRNSQSKTRGS) are enriched in polar residues.

It belongs to the intermediate filament family. In terms of assembly, heterotetramer of two type I and two type II keratins. Expressed in epidermis with a particularly strong staining in the nail matrix, nail bed and hyponychium (at protein level).

In terms of biological role, has a role in hair formation. Specific component of keratin intermediate filaments in the inner root sheath (IRS) of the hair follicle. The sequence is that of Keratin, type II cytoskeletal 74 from Mus musculus (Mouse).